The following is a 538-amino-acid chain: Thermosome subunit beta (538 aa).

The tract at residues 518–538 (SSGSSEEGMEEMGGMGGMPPM) is disordered. Positions 528–538 (EMGGMGGMPPM) are enriched in gly residues.

Belongs to the TCP-1 chaperonin family. In terms of assembly, forms a Heterooligomeric complex of two stacked eight-membered rings.

Functionally, molecular chaperone; binds unfolded polypeptides in vitro, and has a weak ATPase activity. This Methanothermobacter thermautotrophicus (strain ATCC 29096 / DSM 1053 / JCM 10044 / NBRC 100330 / Delta H) (Methanobacterium thermoautotrophicum) protein is Thermosome subunit beta (thsB).